Consider the following 327-residue polypeptide: tRNA dimethylallyltransferase (327 aa).

Residue 14–21 (GPTASGKT) participates in ATP binding. 16-21 (TASGKT) provides a ligand contact to substrate. 2 interaction with substrate tRNA regions span residues 39–42 (DSAL) and 163–167 (QRIQR).

This sequence belongs to the IPP transferase family. Monomer. The cofactor is Mg(2+).

The enzyme catalyses adenosine(37) in tRNA + dimethylallyl diphosphate = N(6)-dimethylallyladenosine(37) in tRNA + diphosphate. Catalyzes the transfer of a dimethylallyl group onto the adenine at position 37 in tRNAs that read codons beginning with uridine, leading to the formation of N6-(dimethylallyl)adenosine (i(6)A). In Xanthomonas euvesicatoria pv. vesicatoria (strain 85-10) (Xanthomonas campestris pv. vesicatoria), this protein is tRNA dimethylallyltransferase.